A 319-amino-acid polypeptide reads, in one-letter code: Plasmodesmata-located protein 4 (319 aa).

Positions M1 to T26 are cleaved as a signal peptide. Topologically, residues S27 to S288 are extracellular. 6 disulfides stabilise this stretch: C39-C127, C103-C112, C115-C140, C177-C247, C223-C232, and C235-C260. Gnk2-homologous domains lie at N45 to I149 and H170 to H269. Residues L289–L309 form a helical membrane-spanning segment. The segment at L289–L309 is necessary and sufficient for plasmodesmal targeting. The Cytoplasmic portion of the chain corresponds to K310 to C319.

Belongs to the cysteine-rich repeat secretory protein family. Plasmodesmata-located proteins (PDLD) subfamily. As to quaternary structure, (Microbial infection) Interacts with Grapevine fanleaf virus (GFLV) 2B-MP. Highly expressed in seeds and roots.

It localises to the cell membrane. Its subcellular location is the cell junction. The protein resides in the plasmodesma. Its function is as follows. Modulates cell-to-cell trafficking. In Arabidopsis thaliana (Mouse-ear cress), this protein is Plasmodesmata-located protein 4.